A 343-amino-acid polypeptide reads, in one-letter code: Phenylalanine--tRNA ligase alpha subunit (343 aa).

Mg(2+) is bound at residue E264.

This sequence belongs to the class-II aminoacyl-tRNA synthetase family. Phe-tRNA synthetase alpha subunit type 1 subfamily. In terms of assembly, tetramer of two alpha and two beta subunits. Requires Mg(2+) as cofactor.

It is found in the cytoplasm. It carries out the reaction tRNA(Phe) + L-phenylalanine + ATP = L-phenylalanyl-tRNA(Phe) + AMP + diphosphate + H(+). The chain is Phenylalanine--tRNA ligase alpha subunit from Aromatoleum aromaticum (strain DSM 19018 / LMG 30748 / EbN1) (Azoarcus sp. (strain EbN1)).